A 462-amino-acid chain; its full sequence is Flavin-containing monooxygenase FMO GS-OX3 (462 aa).

17–22 (GAGPAG) contacts FAD. Residue 212–217 (GNFASG) coordinates NADP(+). Residues 318 to 338 (ALAPGLAFVGLPAMGIVFVMF) form a helical membrane-spanning segment.

It belongs to the FMO family.

It is found in the membrane. It carries out the reaction a (Z)-omega-(methylsulfanyl)-N-sulfo-alkylhydroximate S-glucoside + NADPH + O2 + H(+) = a (Z)-omega-(methylsulfinyl)-alkyl-glucosinolate + NADP(+) + H2O. In terms of biological role, catalyzes the conversion of methylthioalkyl glucosinolates of any chain length into methylsulfinylalkyl glucosinolates. Prefers probably short-chain methylthioalkyl glucosinolates in cv. Landsberg erecta. In Arabidopsis thaliana (Mouse-ear cress), this protein is Flavin-containing monooxygenase FMO GS-OX3 (FMOGS-OX3).